The chain runs to 428 residues: Enolase (428 aa).

Gln163 is a binding site for (2R)-2-phosphoglycerate. Catalysis depends on Glu205, which acts as the Proton donor. The Mg(2+) site is built by Asp242, Glu285, and Asp312. Lys337, Arg366, Ser367, and Lys388 together coordinate (2R)-2-phosphoglycerate. Lys337 serves as the catalytic Proton acceptor.

It belongs to the enolase family. The cofactor is Mg(2+).

The protein localises to the cytoplasm. Its subcellular location is the secreted. It localises to the cell surface. The enzyme catalyses (2R)-2-phosphoglycerate = phosphoenolpyruvate + H2O. It functions in the pathway carbohydrate degradation; glycolysis; pyruvate from D-glyceraldehyde 3-phosphate: step 4/5. Functionally, catalyzes the reversible conversion of 2-phosphoglycerate (2-PG) into phosphoenolpyruvate (PEP). It is essential for the degradation of carbohydrates via glycolysis. The sequence is that of Enolase from Novosphingobium aromaticivorans (strain ATCC 700278 / DSM 12444 / CCUG 56034 / CIP 105152 / NBRC 16084 / F199).